The chain runs to 153 residues: Bursicon (153 aa).

The first 22 residues, 1 to 22 (MLLYHIVGASVLICLLNETAKA), serve as a signal peptide directing secretion. 5 disulfide bridges follow: C29-C78, C43-C92, C53-C113, C57-C115, and C75-C118. One can recognise a CTCK domain in the interval 29–119 (CQATPVIHFL…PLECMCRPCT (91 aa)).

Heterodimer of burs and pburs.

Its subcellular location is the secreted. Functionally, final heterodimeric neurohormone released at the end of the molting cycle, involved in the sclerotization (tanning) of the insect cuticle, melanization and wing spreading. The chain is Bursicon from Apis mellifera (Honeybee).